The sequence spans 207 residues: MKTKILSLANEEVGEISLNKDIFAVEFIRDDIIKQVIDWQRAKAMSGNHKTKTVSEVSGTTKKPFKQKGTGNARQGSLRSVQMRGGGLAHGPIVRSHATQLPKKVRKLGLIHALSEKFAEGKLLVIDSLKLDKPKTSFLVNILNKFQGQSFFVIDGNEVDINFSLAAKNIYNTVIVPQIGANVYDIIRHEYVLLSQEAVNVLEERLR.

Positions Lys50–Gly76 are disordered.

This sequence belongs to the universal ribosomal protein uL4 family. In terms of assembly, part of the 50S ribosomal subunit.

In terms of biological role, one of the primary rRNA binding proteins, this protein initially binds near the 5'-end of the 23S rRNA. It is important during the early stages of 50S assembly. It makes multiple contacts with different domains of the 23S rRNA in the assembled 50S subunit and ribosome. Functionally, forms part of the polypeptide exit tunnel. The polypeptide is Large ribosomal subunit protein uL4 (Rickettsia canadensis (strain McKiel)).